Consider the following 119-residue polypeptide: uncharacterized protein (119 aa).

This is an uncharacterized protein from Orgyia pseudotsugata (Douglas-fir tussock moth).